A 119-amino-acid chain; its full sequence is UPF0102 protein CGSHiGG_01960 (119 aa).

This sequence belongs to the UPF0102 family.

The polypeptide is UPF0102 protein CGSHiGG_01960 (Haemophilus influenzae (strain PittGG)).